We begin with the raw amino-acid sequence, 438 residues long: Probable imidazolonepropionase (438 aa).

Positions 159 and 192 each coordinate 4-imidazolone-5-propanoate. An N-formimidoyl-L-glutamate-binding site is contributed by Tyr159. His260 contacts Fe(3+). His260 contacts Zn(2+). Residue Glu263 participates in 4-imidazolone-5-propanoate binding. Asp334 lines the Fe(3+) pocket. Residue Asp334 coordinates Zn(2+). Asn336 contacts N-formimidoyl-L-glutamate.

This sequence belongs to the metallo-dependent hydrolases superfamily. HutI family. It depends on Zn(2+) as a cofactor. Fe(3+) is required as a cofactor.

It catalyses the reaction 4-imidazolone-5-propanoate + H2O = N-formimidoyl-L-glutamate. It participates in amino-acid degradation; L-histidine degradation into L-glutamate; N-formimidoyl-L-glutamate from L-histidine: step 3/3. The protein is Probable imidazolonepropionase (amdhd1) of Xenopus laevis (African clawed frog).